Here is a 478-residue protein sequence, read N- to C-terminus: Protein nucleotidyltransferase YdiU (478 aa).

Residues Gly84, Gly86, Arg87, Lys107, Asp119, Gly120, Arg170, and Arg177 each contribute to the ATP site. The active-site Proton acceptor is the Asp246. The Mg(2+) site is built by Asn247 and Asp256. An ATP-binding site is contributed by Asp256.

It belongs to the SELO family. The cofactor is Mg(2+). Mn(2+) is required as a cofactor.

It catalyses the reaction L-seryl-[protein] + ATP = 3-O-(5'-adenylyl)-L-seryl-[protein] + diphosphate. It carries out the reaction L-threonyl-[protein] + ATP = 3-O-(5'-adenylyl)-L-threonyl-[protein] + diphosphate. The catalysed reaction is L-tyrosyl-[protein] + ATP = O-(5'-adenylyl)-L-tyrosyl-[protein] + diphosphate. The enzyme catalyses L-histidyl-[protein] + UTP = N(tele)-(5'-uridylyl)-L-histidyl-[protein] + diphosphate. It catalyses the reaction L-seryl-[protein] + UTP = O-(5'-uridylyl)-L-seryl-[protein] + diphosphate. It carries out the reaction L-tyrosyl-[protein] + UTP = O-(5'-uridylyl)-L-tyrosyl-[protein] + diphosphate. Functionally, nucleotidyltransferase involved in the post-translational modification of proteins. It can catalyze the addition of adenosine monophosphate (AMP) or uridine monophosphate (UMP) to a protein, resulting in modifications known as AMPylation and UMPylation. In Escherichia coli O17:K52:H18 (strain UMN026 / ExPEC), this protein is Protein nucleotidyltransferase YdiU.